Consider the following 500-residue polypeptide: NAD(P)H-quinone oxidoreductase chain 4, chloroplastic (500 aa).

Transmembrane regions (helical) follow at residues 4–24, 35–55, 87–107, 113–130, 134–154, 167–187, 208–228, 242–262, 272–292, 305–325, 330–350, 386–406, 416–436, and 463–483; these read FPWL…IFFF, YTIC…CYHF, IGPV…AWPV, LFHF…GSFS, LLLF…LLSM, FILY…GMGL, ALEI…LPII, HYST…YGLV, AHSI…IYAA, IAYS…SITD, GAIL…FLAG, LALP…GIIT, ILIT…SLSM, and FVSI…DFVF.

Belongs to the complex I subunit 4 family.

The protein resides in the plastid. It is found in the chloroplast thylakoid membrane. It catalyses the reaction a plastoquinone + NADH + (n+1) H(+)(in) = a plastoquinol + NAD(+) + n H(+)(out). It carries out the reaction a plastoquinone + NADPH + (n+1) H(+)(in) = a plastoquinol + NADP(+) + n H(+)(out). The protein is NAD(P)H-quinone oxidoreductase chain 4, chloroplastic of Nandina domestica (Heavenly bamboo).